The following is a 550-amino-acid chain: MSAKDVKFGGDARDRMLRGVDILANAVKVTLGPKGRNVLIEKSFGAPRITKDGVTVAKEIELDDKFENMGAQMLREVASKTNDLAGDGTTTATVLAQAIVREGAKSVAAGMNPMDLRRGIEIAVQAVVKDIQKRARPVASSAEIAQVGTISANGDAPIGKMIAQAMQKVGNEGVITVEENKSLETEVDIVEGMKFDRGYLSPYFVTNAEKMTVELDDVYILLHEKKVSGLQSMLPVLEAVVQSGKPLLIIAEDVEGEALATLVVNRLRGGLKVSAVKAPGFGDRRKAMLEDIAILTGGQLISEEIGIKLESVTLKMLGRAKKVVIDKENTTIVGGAGKKPDIEARVQQIKAQIEETSSDYDREKLQERLAKLAGGVAVIRVGGATEVEVKEKKDRVEDALNATRAAVQEGIVPGGGVALLRAKKAVGRIHNDNADVQAGINIVLKALEAPIRQIAENAGVEGSIVVGKILENKSETFGFDAQTEDYVDMLAKGIVDPAKVVRTALQDASSVAALLVTTEAMVAELPKEAAPAMPGGGGMGGMGGMGGMGF.

Residues 30 to 33 (TLGP), lysine 51, 87 to 91 (DGTTT), glycine 415, and aspartate 496 each bind ATP.

The protein belongs to the chaperonin (HSP60) family. In terms of assembly, forms a cylinder of 14 subunits composed of two heptameric rings stacked back-to-back. Interacts with the co-chaperonin GroES.

Its subcellular location is the cytoplasm. The enzyme catalyses ATP + H2O + a folded polypeptide = ADP + phosphate + an unfolded polypeptide.. Functionally, together with its co-chaperonin GroES, plays an essential role in assisting protein folding. The GroEL-GroES system forms a nano-cage that allows encapsulation of the non-native substrate proteins and provides a physical environment optimized to promote and accelerate protein folding. The chain is Chaperonin GroEL 1 from Rhodopseudomonas palustris (strain HaA2).